The primary structure comprises 500 residues: Cytochrome P450 2C11 (500 aa).

C435 contributes to the heme binding site.

It belongs to the cytochrome P450 family. Heme serves as cofactor. Liver and kidney; male-specific.

The protein localises to the endoplasmic reticulum membrane. It localises to the microsome membrane. The catalysed reaction is an organic molecule + reduced [NADPH--hemoprotein reductase] + O2 = an alcohol + oxidized [NADPH--hemoprotein reductase] + H2O + H(+). It catalyses the reaction testosterone + reduced [NADPH--hemoprotein reductase] + O2 = 2alpha,17beta-dihydroxyandrost-4-en-3-one + oxidized [NADPH--hemoprotein reductase] + H2O + H(+). The enzyme catalyses testosterone + reduced [NADPH--hemoprotein reductase] + O2 = 16alpha,17beta-dihydroxyandrost-4-en-3-one + oxidized [NADPH--hemoprotein reductase] + H2O + H(+). It carries out the reaction (5Z,8Z,11Z,14Z)-eicosatetraenoate + reduced [NADPH--hemoprotein reductase] + O2 = (8R,9S)-epoxy-(5Z,11Z,14Z)-eicosatrienoate + oxidized [NADPH--hemoprotein reductase] + H2O + H(+). The catalysed reaction is (5Z,8Z,11Z,14Z)-eicosatetraenoate + reduced [NADPH--hemoprotein reductase] + O2 = (8S,9R)-epoxy-(5Z,11Z,14Z)-eicosatrienoate + oxidized [NADPH--hemoprotein reductase] + H2O + H(+). It catalyses the reaction (5Z,8Z,11Z,14Z)-eicosatetraenoate + reduced [NADPH--hemoprotein reductase] + O2 = (11R,12S)-epoxy-(5Z,8Z,14Z)-eicosatrienoate + oxidized [NADPH--hemoprotein reductase] + H2O + H(+). The enzyme catalyses (5Z,8Z,11Z,14Z)-eicosatetraenoate + reduced [NADPH--hemoprotein reductase] + O2 = (11S,12R)-epoxy-(5Z,8Z,14Z)-eicosatrienoate + oxidized [NADPH--hemoprotein reductase] + H2O + H(+). It carries out the reaction (5Z,8Z,11Z,14Z)-eicosatetraenoate + reduced [NADPH--hemoprotein reductase] + O2 = (14R,15S)-epoxy-(5Z,8Z,11Z)-eicosatrienoate + oxidized [NADPH--hemoprotein reductase] + H2O + H(+). The catalysed reaction is (5Z,8Z,11Z,14Z)-eicosatetraenoate + reduced [NADPH--hemoprotein reductase] + O2 = (14S,15R)-epoxy-(5Z,8Z,11Z)-eicosatrienoate + oxidized [NADPH--hemoprotein reductase] + H2O + H(+). It catalyses the reaction (5Z,8Z,11Z,14Z,17Z)-eicosapentaenoate + reduced [NADPH--hemoprotein reductase] + O2 = 8,9-epoxy-(5Z,11Z,14Z,17Z)-eicosatetraenoate + oxidized [NADPH--hemoprotein reductase] + H2O + H(+). The enzyme catalyses (5Z,8Z,11Z,14Z,17Z)-eicosapentaenoate + reduced [NADPH--hemoprotein reductase] + O2 = 11,12-epoxy-(5Z,8Z,14Z,17Z)-eicosatetraenoate + oxidized [NADPH--hemoprotein reductase] + H2O + H(+). It carries out the reaction (5Z,8Z,11Z,14Z,17Z)-eicosapentaenoate + reduced [NADPH--hemoprotein reductase] + O2 = 14,15-epoxy-(5Z,8Z,11Z,17Z)-eicosatetraenoate + oxidized [NADPH--hemoprotein reductase] + H2O + H(+). The catalysed reaction is (5Z,8Z,11Z,14Z,17Z)-eicosapentaenoate + reduced [NADPH--hemoprotein reductase] + O2 = (17S,18R)-epoxy-(5Z,8Z,11Z,14Z)-eicosatetraenoate + oxidized [NADPH--hemoprotein reductase] + H2O + H(+). It catalyses the reaction (5Z,8Z,11Z,14Z,17Z)-eicosapentaenoate + reduced [NADPH--hemoprotein reductase] + O2 = (17R,18S)-epoxy-(5Z,8Z,11Z,14Z)-eicosatetraenoate + oxidized [NADPH--hemoprotein reductase] + H2O + H(+). The protein operates within lipid metabolism; arachidonate metabolism. It participates in steroid metabolism. A cytochrome P450 monooxygenase involved in the metabolism of steroid hormones and fatty acids. Catalyzes the hydroxylation of carbon-hydrogen bonds. Metabolizes testosterone to 2alpha- and 16alpha-hydroxytestosterone. Catalyzes the epoxidation of double bonds of polyunsaturated fatty acids (PUFAs). Converts arachidonic acid (ARA, C20:4(n-6)) primarily to epoxyeicosatrienoic acid (EET) regioisomers, 8,9-, 11,12-, and 14,15-EET, with both R,S and S,R stereochemistry. Preferentially produces 11R,12S-EET enantiomer. To a lesser extent, catalyzes the hydroxylation of arachidonic acid producing hydroxyeicosatetraenoates (HETEs). Metabolizes eicosapentaenoic acid (EPA, C20:5(n-3)) to epoxyeicosatetraenoic acid (EETeTr) regioisomers, 8,9-, 11,12-, 14,15-, and 17,18-EETeTr, preferentially producing 17R,18S-EETeTr enantiomer. Mechanistically, uses molecular oxygen inserting one oxygen atom into a substrate, and reducing the second into a water molecule, with two electrons provided by NADPH via cytochrome P450 reductase (NADPH--hemoprotein reductase). In Rattus norvegicus (Rat), this protein is Cytochrome P450 2C11 (Cyp2c11).